Consider the following 575-residue polypeptide: Alpha-(1,6)-fucosyltransferase (575 aa).

The Cytoplasmic segment spans residues 1–9 (MRPWTGSWR). A helical; Signal-anchor for type II membrane protein transmembrane segment spans residues 10 to 30 (WIMLILFAWGTLLFYIGGHLV). Topologically, residues 31-575 (RDNDHPDHSS…KVPHVPEAEK (545 aa)) are lumenal. 3 disulfide bridges follow: Cys-204-Cys-266, Cys-212-Cys-230, and Cys-218-Cys-222. A GT23 domain is found at 206 to 493 (KAKKLVCNIN…PDASANFHSL (288 aa)). At Ser-278 the chain carries Phosphoserine. Positions 299–305 (PRPPYLP) match the SH3-binding motif. An important for donor substrate binding region spans residues 365–366 (RR). A disulfide bridge links Cys-465 with Cys-472. The 62-residue stretch at 502–563 (QNAHNQIAIY…PSYKVREKIE (62 aa)) folds into the SH3 domain.

The protein belongs to the glycosyltransferase 23 family. Tyrosine phosphorylated by PKDCC/VLK. In terms of tissue distribution, highest expression found in brain. Also found in heart, lung, spleen and kidney.

The protein localises to the golgi apparatus. Its subcellular location is the golgi stack membrane. The catalysed reaction is N(4)-{beta-D-GlcNAc-(1-&gt;2)-alpha-D-Man-(1-&gt;3)-[beta-D-GlcNAc-(1-&gt;2)-alpha-D-Man-(1-&gt;6)]-beta-D-Man-(1-&gt;4)-beta-D-GlcNAc-(1-&gt;4)-beta-D-GlcNAc}-L-asparaginyl-[protein] + GDP-beta-L-fucose = an N(4)-{beta-D-GlcNAc-(1-&gt;2)-alpha-D-Man-(1-&gt;3)-[beta-D-GlcNAc-(1-&gt;2)-alpha-D-Man-(1-&gt;6)]-beta-D-Man-(1-&gt;4)-beta-D-GlcNAc-(1-&gt;4)-[alpha-L-Fuc-(1-&gt;6)]-beta-D-GlcNAc}-L-asparaginyl-[protein] + GDP + H(+). It functions in the pathway protein modification; protein glycosylation. In terms of biological role, catalyzes the addition of fucose in alpha 1-6 linkage to the first GlcNAc residue, next to the peptide chains in N-glycans. The polypeptide is Alpha-(1,6)-fucosyltransferase (FUT8) (Bos taurus (Bovine)).